The sequence spans 160 residues: NADH-quinone oxidoreductase subunit B (160 aa).

[4Fe-4S] cluster-binding residues include cysteine 37, cysteine 38, cysteine 102, and cysteine 132.

Belongs to the complex I 20 kDa subunit family. In terms of assembly, NDH-1 is composed of 14 different subunits. Subunits NuoB, C, D, E, F, and G constitute the peripheral sector of the complex. [4Fe-4S] cluster serves as cofactor.

It localises to the cell inner membrane. It carries out the reaction a quinone + NADH + 5 H(+)(in) = a quinol + NAD(+) + 4 H(+)(out). NDH-1 shuttles electrons from NADH, via FMN and iron-sulfur (Fe-S) centers, to quinones in the respiratory chain. Couples the redox reaction to proton translocation (for every two electrons transferred, four hydrogen ions are translocated across the cytoplasmic membrane), and thus conserves the redox energy in a proton gradient. The polypeptide is NADH-quinone oxidoreductase subunit B (Neisseria gonorrhoeae (strain NCCP11945)).